Reading from the N-terminus, the 273-residue chain is Undecaprenyl-diphosphatase (273 aa).

A run of 7 helical transmembrane segments spans residues 4–24 (FLLLKGLILGIVEGLTEFLPI), 43–63 (KGKVFTIVIQLGAILAVCWEY), 83–103 (FVLNLLIAFLPAAILGLLFIK), 109–129 (LFHPVPVALAFIVGGLLILWA), 184–204 (ATEFSFFLAIPVMFAATFYDL), 218–238 (VFAIGFVASFISALLAVRGLL), and 248–268 (VFAWYRIGFGIIVLITAYSGM).

Belongs to the UppP family.

It is found in the cell inner membrane. The catalysed reaction is di-trans,octa-cis-undecaprenyl diphosphate + H2O = di-trans,octa-cis-undecaprenyl phosphate + phosphate + H(+). Catalyzes the dephosphorylation of undecaprenyl diphosphate (UPP). Confers resistance to bacitracin. The chain is Undecaprenyl-diphosphatase from Nitrosospira multiformis (strain ATCC 25196 / NCIMB 11849 / C 71).